We begin with the raw amino-acid sequence, 339 residues long: Anthranilate phosphoribosyltransferase (339 aa).

Residues Gly81, Gly84–Asp85, Ser89, Asn91–Ser94, Lys109–Ser117, and Ala121 each bind 5-phospho-alpha-D-ribose 1-diphosphate. Gly81 is a binding site for anthranilate. Ser93 serves as a coordination point for Mg(2+). Asn112 contacts anthranilate. Arg167 lines the anthranilate pocket. The Mg(2+) site is built by Asp225 and Glu226.

The protein belongs to the anthranilate phosphoribosyltransferase family. In terms of assembly, homodimer. Requires Mg(2+) as cofactor.

The enzyme catalyses N-(5-phospho-beta-D-ribosyl)anthranilate + diphosphate = 5-phospho-alpha-D-ribose 1-diphosphate + anthranilate. It functions in the pathway amino-acid biosynthesis; L-tryptophan biosynthesis; L-tryptophan from chorismate: step 2/5. Catalyzes the transfer of the phosphoribosyl group of 5-phosphorylribose-1-pyrophosphate (PRPP) to anthranilate to yield N-(5'-phosphoribosyl)-anthranilate (PRA). This is Anthranilate phosphoribosyltransferase from Brucella ovis (strain ATCC 25840 / 63/290 / NCTC 10512).